The following is a 704-amino-acid chain: Phytyl ester synthase 1, chloroplastic (704 aa).

The transit peptide at 1-27 directs the protein to the chloroplast; the sequence is MATCSSSLLVLPNLRLSSNQRRNFKVR.

The protein belongs to the diacylglycerol acyltransferase family. As to quaternary structure, interacts with PGM48. Mostly expressed in flowers (e.g. sepals, petals and stamen).

The protein localises to the plastid. Its subcellular location is the chloroplast. It is found in the plastoglobule. The catalysed reaction is a 1,2-diacyl-3-O-(beta-D-galactosyl)-sn-glycerol + a 1,2-diacylglycerol = an acyl-3-O-(beta-D-galactosyl)-sn-glycerol + a triacylglycerol. The enzyme catalyses a 1,2-diacylglycerol + a fatty acyl-CoA = a triacylglycerol + CoA. It carries out the reaction a fatty acyl-[ACP] + a 1,2-diacylglycerol = a triacylglycerol + holo-[ACP]. It catalyses the reaction phytol + a fatty acyl-CoA = a fatty acid phytyl ester + CoA. The catalysed reaction is phytol + tetradecanoyl-CoA = tetradecanoate phytyl ester + CoA. The enzyme catalyses a 1,3-diacylglycerol + a fatty acyl-CoA = a triacylglycerol + CoA. It carries out the reaction 1,2-dihexanoylglycerol + tetradecanoyl-CoA = 1,2-dihexanoyl-3-tetradecanoylglycerol + CoA. It catalyses the reaction 1,2-dihexanoylglycerol + hexadecanoyl-CoA = 1,2-dihexanoyl-3-hexadecanoylglycerol + CoA. The catalysed reaction is 1,2-dihexanoylglycerol + octadecanoyl-CoA = 1,2-dihexanoyl-3-octadecanoylglycerol + CoA. The enzyme catalyses (7Z,10Z,13Z)-hexadecatrienoyl-CoA + 1,2-dihexanoylglycerol = 1,2-dihexanoyl-3-(7Z,10Z,13Z-hexadecatrienoyl)-glycerol + CoA. It carries out the reaction 1,2-dihexanoylglycerol + (9Z)-octadecenoyl-CoA = 1,2-dihexanoyl-3-(9Z-octadecenoyl)-glycerol + CoA. It catalyses the reaction 1,2-dihexanoylglycerol + (9Z,12Z,15Z)-octadecatrienoyl-CoA = 1,2-dihexanoyl-3-(9Z,12Z,15Z-octadecatrienoyl)-glycerol + CoA. The catalysed reaction is phytol + decanoyl-CoA = decanoate phytyl ester + CoA. The enzyme catalyses (7Z,10Z,13Z)-hexadecatrienoyl-CoA + phytol = (7Z,10Z,13Z)-hexadecatrienoate phytyl ester + CoA. It carries out the reaction phytol + dodecanoyl-CoA = dodecanoate phytyl ester + CoA. Acyltransferase involved in fatty acid phytyl ester synthesis in chloroplasts, a process required for the maintenance of the photosynthetic membrane integrity during abiotic stress and senescence. Exhibits phytyl ester synthesis and diacylglycerol acyltransferase activities with broad substrate specificities, and can employ acyl-CoAs, acyl carrier proteins, and galactolipids as acyl donors. This chain is Phytyl ester synthase 1, chloroplastic, found in Arabidopsis thaliana (Mouse-ear cress).